The primary structure comprises 766 residues: ABC-type oligopeptide transporter ABCB9 (766 aa).

8 helical membrane passes run 7–27, 47–67, 84–104, 116–136, 185–205, 225–245, 319–339, and 416–436; these read VVVT…IYVF, VLDL…ATIG, LVIT…LLLF, FWAL…LWWL, VAFL…ETFL, FSTA…AAGI, VFMF…FPII, and SGLT…HLVI. The ABC transmembrane type-1 domain maps to 188–471; the sequence is LVAASFFLIV…VGSVYSGLMQ (284 aa). Residues 504 to 740 enclose the ABC transporter domain; that stretch reads VDFENVTFTY…GGLYAKLVQR (237 aa). 539 to 546 lines the ATP pocket; that stretch reads GPSGSGKS.

The protein belongs to the ABC transporter superfamily. ABCB family. MHC peptide exporter (TC 3.A.1.209) subfamily. Homodimer. Interacts (via TMD0 region) with LAMP1; this interaction strongly stabilizes ABCB9 and protects ABCB9 against lysosomal degradation. Interacts (via TMD0 region) with LAMP2 (isoform LAMP-2B). Interacts (via TMD0) with YIF1B; this interaction allows (but is not essential) the ER-to-Golgi trafficking and strongly depends on a salt bridge within TMD0. Highly expressed in testis, and at moderate levels in brain, spinal cord, and thyroid. Not expressed in monocytes but strongly expressed during differentiation of monocytes to dendritic cells and macrophages.

The protein resides in the lysosome membrane. The catalysed reaction is a [oligopeptide](in) + ATP + H2O = a [oligopeptide](out) + ADP + phosphate + H(+). Its activity is regulated as follows. Transport activity is limited by threshold levels of luminal peptide. ATP hydrolysis is reduced in the presence of the spatial challenging 18-mer peptide by 50% and the branched 16-mer peptide by 75%. Transport rate of the longer peptides is strongly reduced. Functionally, ATP-dependent low-affinity peptide transporter which translocates a broad spectrum of peptides from the cytosol to the lysosomal lumen for degradation. Displays a broad peptide length specificity from 6-mer up to at least 59-mer peptides with an optimum of 23-mers. Binds and transports smaller and larger peptides with the same affinity. Favors positively charged, aromatic or hydrophobic residues in the N- and C-terminal positions whereas negatively charged residues as well as asparagine and methionine are not favored. The protein is ABC-type oligopeptide transporter ABCB9 of Homo sapiens (Human).